The following is a 734-amino-acid chain: Photosystem I P700 chlorophyll a apoprotein A2 (734 aa).

The next 8 helical transmembrane spans lie at 46-69 (IFAS…FHVA), 135-158 (LYTG…LHLQ), 175-199 (LNHH…HVAI), 273-291 (MAHH…GHMY), 330-353 (IHFQ…QHMY), 369-395 (AALY…IFFI), 417-439 (AIIS…LYVH), and 517-535 (FLVH…LILV). 2 residues coordinate [4Fe-4S] cluster: cysteine 559 and cysteine 568. Transmembrane regions (helical) follow at residues 575–596 (AFYL…YWHW) and 643–665 (LSVW…MFLI). Chlorophyll a-binding residues include histidine 654, methionine 662, and tyrosine 670. A phylloquinone-binding site is contributed by tryptophan 671. The chain crosses the membrane as a helical span at residues 707–727 (LVGLAHFSVGYIFTYAAFLIA).

This sequence belongs to the PsaA/PsaB family. The PsaA/B heterodimer binds the P700 chlorophyll special pair and subsequent electron acceptors. PSI consists of a core antenna complex that captures photons, and an electron transfer chain that converts photonic excitation into a charge separation. The eukaryotic PSI reaction center is composed of at least 11 subunits. P700 is a chlorophyll a/chlorophyll a' dimer, A0 is one or more chlorophyll a, A1 is one or both phylloquinones and FX is a shared 4Fe-4S iron-sulfur center. serves as cofactor.

It is found in the plastid. The protein resides in the chloroplast thylakoid membrane. The enzyme catalyses reduced [plastocyanin] + hnu + oxidized [2Fe-2S]-[ferredoxin] = oxidized [plastocyanin] + reduced [2Fe-2S]-[ferredoxin]. Functionally, psaA and PsaB bind P700, the primary electron donor of photosystem I (PSI), as well as the electron acceptors A0, A1 and FX. PSI is a plastocyanin-ferredoxin oxidoreductase, converting photonic excitation into a charge separation, which transfers an electron from the donor P700 chlorophyll pair to the spectroscopically characterized acceptors A0, A1, FX, FA and FB in turn. Oxidized P700 is reduced on the lumenal side of the thylakoid membrane by plastocyanin. The protein is Photosystem I P700 chlorophyll a apoprotein A2 of Hordeum vulgare (Barley).